A 277-amino-acid polypeptide reads, in one-letter code: Acetyl-coenzyme A carboxylase carboxyl transferase subunit beta (277 aa).

The CoA carboxyltransferase N-terminal domain maps to 25-277; the sequence is LVRRCPVCHT…DLLRLHKGES (253 aa). Zn(2+) is bound by residues cysteine 29, cysteine 32, cysteine 47, and cysteine 50. A C4-type zinc finger spans residues 29-50; sequence CPVCHTTFLTDHWEPTRLCPAC.

The protein belongs to the AccD/PCCB family. As to quaternary structure, acetyl-CoA carboxylase is a heterohexamer composed of biotin carboxyl carrier protein (AccB), biotin carboxylase (AccC) and two subunits each of ACCase subunit alpha (AccA) and ACCase subunit beta (AccD). Zn(2+) is required as a cofactor.

The protein resides in the cytoplasm. It catalyses the reaction N(6)-carboxybiotinyl-L-lysyl-[protein] + acetyl-CoA = N(6)-biotinyl-L-lysyl-[protein] + malonyl-CoA. The protein operates within lipid metabolism; malonyl-CoA biosynthesis; malonyl-CoA from acetyl-CoA: step 1/1. Its function is as follows. Component of the acetyl coenzyme A carboxylase (ACC) complex. Biotin carboxylase (BC) catalyzes the carboxylation of biotin on its carrier protein (BCCP) and then the CO(2) group is transferred by the transcarboxylase to acetyl-CoA to form malonyl-CoA. The chain is Acetyl-coenzyme A carboxylase carboxyl transferase subunit beta from Levilactobacillus brevis (strain ATCC 367 / BCRC 12310 / CIP 105137 / JCM 1170 / LMG 11437 / NCIMB 947 / NCTC 947) (Lactobacillus brevis).